A 168-amino-acid polypeptide reads, in one-letter code: Short form salivary protein D7R2 (168 aa).

The signal sequence occupies residues 1-21 (MFKKLLLSVGLVWCLISLGQA). Intrachain disulfides connect Cys-30–Cys-62, Cys-43–Cys-168, and Cys-101–Cys-120. Residues Glu-31 and Arg-46 each coordinate noradrenaline. Glu-31 contributes to the serotonin binding site. The serotonin site is built by His-59, Tyr-118, Asp-135, and Glu-138. 3 residues coordinate histamine: Tyr-118, Asp-135, and Glu-138. Residues Asp-135 and Glu-138 each contribute to the noradrenaline site.

It belongs to the PBP/GOBP family. Female saliva (at protein level). Female salivary gland. Not detected in female carcass without salivary glands. Not detected in male tissues.

Its subcellular location is the secreted. Modulates blood feeding of female mosquitoes on vertebrate species by binding and sequestering different mediators involved in the host response. Binds serotonin, noradrenaline, histamine and adrenaline. Inhibits histamine-, serotonin- and noradrenaline-induced smooth muscle contraction. Exhibits vasodilating activity. This chain is Short form salivary protein D7R2, found in Anopheles gambiae (African malaria mosquito).